A 225-amino-acid polypeptide reads, in one-letter code: Single-pass membrane and coiled-coil domain-containing protein 3 (225 aa).

Positions 62 to 92 form a coiled coil; the sequence is IKENCDLIIQAIMKIQKELQKVDEALKDKLE. Residues 155–175 traverse the membrane as a helical segment; that stretch reads IGASLLGSIGVAVLGLGIDMI. Residues 183–207 adopt a coiled-coil conformation; sequence VEKTQLQAAIKSYEKHLVEFKSASE.

It is found in the membrane. The protein is Single-pass membrane and coiled-coil domain-containing protein 3 (SMCO3) of Homo sapiens (Human).